Consider the following 385-residue polypeptide: Zinc finger protein B385R (385 aa).

C2H2-type zinc fingers lie at residues 166–190 (LQCPNCGCIQELMGTIFDETHFYNH) and 168–190 (CPNCGCIQELMGTIFDETHFYNH).

Belongs to the asfivirus B385R family.

In African swine fever virus (isolate Tick/Malawi/Lil 20-1/1983) (ASFV), this protein is Zinc finger protein B385R.